A 27-amino-acid chain; its full sequence is Antimicrobial peptide 1 (27 aa).

As to expression, expressed by the skin glands.

The protein resides in the secreted. In terms of biological role, has very weak antimicrobial activity against Gram-positive bacterium S.aureus and Gram-negative bacterium E.coli and stronger activity against yeast C.albicans. Enhances the antibacterial activity of XT3. Has hemolytic activity against human red blood cells. This Xenopus tropicalis (Western clawed frog) protein is Antimicrobial peptide 1.